Consider the following 328-residue polypeptide: D-cysteine desulfhydrase (328 aa).

K51 carries the post-translational modification N6-(pyridoxal phosphate)lysine.

It belongs to the ACC deaminase/D-cysteine desulfhydrase family. In terms of assembly, homodimer. It depends on pyridoxal 5'-phosphate as a cofactor.

It catalyses the reaction D-cysteine + H2O = hydrogen sulfide + pyruvate + NH4(+) + H(+). Functionally, catalyzes the alpha,beta-elimination reaction of D-cysteine and of several D-cysteine derivatives. It could be a defense mechanism against D-cysteine. In Escherichia coli O6:H1 (strain CFT073 / ATCC 700928 / UPEC), this protein is D-cysteine desulfhydrase.